Reading from the N-terminus, the 134-residue chain is Putative STAG3-like protein 2 (134 aa).

The region spanning 10 to 95 (PKVTCRDVLP…GRFKDWMVSM (86 aa)) is the SCD domain.

Belongs to the SCC3 family.

Its subcellular location is the nucleus. The protein is Putative STAG3-like protein 2 (STAG3L2) of Homo sapiens (Human).